The primary structure comprises 583 residues: COP9 signalosome complex subunit 10 (583 aa).

Positions 1 to 35 (MSDEEDYAEYMMSEEDMSSFEMDVDSDVEPDDAGL) are enriched in acidic residues. Positions 1 to 55 (MSDEEDYAEYMMSEEDMSSFEMDVDSDVEPDDAGLEQDQQVTGDDYDGSAGNSGD) are disordered. The 189-residue stretch at 297 to 485 (DHYNQSQMLS…DYVYFGEEYF (189 aa)) folds into the PCI domain.

In terms of assembly, component of a COP9 signalosome-like (CSN) complex.

The protein resides in the cytoplasm. The protein localises to the nucleus. Component of the COP9 signalosome (CSN) complex that acts as an regulator of the ubiquitin (Ubl) conjugation pathway by mediating the deneddylation of the cullin subunit of SCF-type E3 ubiquitin-protein ligase complexes. The CSN complex is involved in the regulation of the mating pheromone response. In Kluyveromyces lactis (strain ATCC 8585 / CBS 2359 / DSM 70799 / NBRC 1267 / NRRL Y-1140 / WM37) (Yeast), this protein is COP9 signalosome complex subunit 10 (RRI2).